Consider the following 33-residue polypeptide: Beta/kappa-theraphotoxin-Hlv1a (33 aa).

Intrachain disulfides connect Cys2-Cys17, Cys9-Cys22, and Cys16-Cys29. Ile33 is modified (isoleucine amide).

Belongs to the neurotoxin 10 (Hwtx-1) family. 11 (haplotoxin-2) subfamily. In terms of tissue distribution, expressed by the venom gland.

The protein resides in the secreted. In terms of biological role, spider venom neurotoxin that blocks voltage-gated sodium channel Nav1.3/SCN3A in human (IC(50)=80 nM) and rat (IC(50)=160 nM). Partially inhibits human Kv11.1/KCNH2/ERG (25% at 175 uM). This is Beta/kappa-theraphotoxin-Hlv1a from Cyriopagopus lividus (Cobalt blue tarantula).